The sequence spans 292 residues: Pyruvate formate-lyase 2-activating enzyme (292 aa).

Residues N33 to Q287 enclose the Radical SAM core domain. C47, C51, and C54 together coordinate [4Fe-4S] cluster. W53–A55 lines the S-adenosyl-L-methionine pocket. In terms of domain architecture, 4Fe-4S ferredoxin-type spans G62–R96. S-adenosyl-L-methionine-binding positions include G126, D175–K177, and H247.

It belongs to the organic radical-activating enzymes family. Requires [4Fe-4S] cluster as cofactor.

It is found in the cytoplasm. The catalysed reaction is glycyl-[formate C-acetyltransferase] + reduced [flavodoxin] + S-adenosyl-L-methionine = glycin-2-yl radical-[formate C-acetyltransferase] + semiquinone [flavodoxin] + 5'-deoxyadenosine + L-methionine + H(+). Its function is as follows. Activation of pyruvate formate-lyase 2 under anaerobic conditions by generation of an organic free radical, using S-adenosylmethionine and reduced flavodoxin as cosubstrates to produce 5'-deoxy-adenosine. This is Pyruvate formate-lyase 2-activating enzyme (pflC) from Escherichia coli (strain K12).